The primary structure comprises 2357 residues: Protein transport protein Sec16A (2357 aa).

Disordered stretches follow at residues 1–225 (MQPP…SYQH), 240–347 (QAAS…AHHP), 394–463 (SFSS…GTGT), 504–562 (YGPL…ARPQ), 579–630 (DTSG…TSAN), 666–689 (KRRAAVAPPDATSGNLEQPPDNME), 714–739 (TAGTPLDTVRPVPDKRPSARAQGPVK), 778–820 (SEVV…PPKV), 917–1008 (VTGA…QEEA), 1023–1055 (PVRMYSPSPSDGPASQQPLPNHPRQSGPGLHNQ), and 1076–1151 (QPEL…AAVR). Composition is skewed to polar residues over residues 57-75 (NRQTLQNTPVGSSSKSSLP) and 94-104 (TPTNAGDSSTG). The segment covering 208–221 (MPGQWGPAQGGPQP) has biased composition (low complexity). Over residues 281–290 (VHQQSKNHPL) the composition is skewed to polar residues. Phosphoserine is present on serine 311. Over residues 333-342 (PFTQGNSPEN) the composition is skewed to polar residues. The segment covering 540–561 (PDSVSSSYSSHSHRSPPGSARP) has biased composition (low complexity). A phosphoserine mark is found at serine 581, serine 591, serine 609, serine 611, and serine 614. Positions 581–590 (SGSFFKQIDS) are enriched in polar residues. Threonine 615 carries the post-translational modification Phosphothreonine. Position 617 is a phosphoserine (serine 617). 3 stretches are compositionally biased toward polar residues: residues 921 to 959 (SLPSSIPQNCAPQGSGSSEMIASQSASWLVQQLSPQTPQ), 972 to 997 (FVSSPAGNTSVMLVPPASSTLVPNSN), and 1029 to 1041 (PSPSDGPASQQPL). The interval 1037–1905 (SQQPLPNHPR…QHVERQIQEG (869 aa)) is required for localization to endoplasmic reticulum exit sites. The residue at position 1087 (serine 1087) is a Phosphoserine. An interaction with MIA3 region spans residues 1118-1415 (ASPASVNTGQ…EAPHAPGSFH (298 aa)). Residues 1119 to 1420 (SPASVNTGQL…PGSFHGDYAY (302 aa)) are required for endoplasmic reticulum localization. The segment covering 1134–1150 (QASSASVTSTNSSQAAV) has biased composition (low complexity). The residue at position 1223 (serine 1223) is a Phosphoserine. Residues 1226 to 1253 (AENHRYSEPERPSSRASHYSDQLAPRQG) form a disordered region. The segment covering 1227–1238 (ENHRYSEPERPS) has biased composition (basic and acidic residues). Serine 1245 bears the Phosphoserine mark. Threonine 1340 bears the Phosphothreonine mark. Serine 1342, serine 1362, serine 1365, serine 1371, serine 1374, serine 1377, serine 1384, serine 1588, and serine 1616 each carry phosphoserine. The interval 1344 to 1395 (DDDAEIHRDPYGEEADRRSIHSEHSARSLRSTHSLPSRRSSLSSHSHQSQIY) is disordered. The segment covering 1348-1369 (EIHRDPYGEEADRRSIHSEHSA) has biased composition (basic and acidic residues). The segment covering 1371–1392 (SLRSTHSLPSRRSSLSSHSHQS) has biased composition (low complexity). A central conserved domain (CCD); mediates interaction with RNF183, LRRK2 and SEC13 region spans residues 1449 to 1905 (QVPSRPTSPE…QHVERQIQEG (457 aa)). Residues 1907–1943 (VLWSQDGTEPQQCRITSGSEVEQSDGPGLNQQAGPQA) are disordered. Over residues 1908-1927 (LWSQDGTEPQQCRITSGSEV) the composition is skewed to polar residues. Residue threonine 1922 is modified to Phosphothreonine. Phosphoserine occurs at positions 1951, 2043, 2063, 2077, and 2094. 3 disordered regions span residues 1993–2141 (ELSP…RTEA), 2156–2198 (KKNQ…PTAS), and 2240–2357 (PLPI…AALN). The segment covering 2092–2105 (GSSSLTRAPSLTSD) has biased composition (polar residues). Residues 2106-2126 (SEGKKPAQAVKKEPKEPKKTE) are compositionally biased toward basic and acidic residues. The tract at residues 2126-2357 (ESWFSRWLPG…IGQRKYAALN (232 aa)) is required for interaction with SEC23A. A Phosphoserine modification is found at serine 2291. Residues 2332 to 2343 (QLVQASVTSGNS) show a composition bias toward polar residues.

This sequence belongs to the SEC16 family. SEC16A and SEC16B are each present in multiple copies in a heteromeric complex. Interacts with SEC23A. Interacts with RNF183, RNF152, MIA3 and SEC13. Interacts with GORASP2 in response to ER stress. Interacts with LRRK2 (via ROC domain). Interacts with RAB10.

It localises to the endoplasmic reticulum membrane. Its subcellular location is the golgi apparatus membrane. It is found in the cytoplasm. The protein resides in the perinuclear region. The protein localises to the cytosol. It localises to the microsome membrane. Functionally, acts as a molecular scaffold that plays a key role in the organization of the endoplasmic reticulum exit sites (ERES), also known as transitional endoplasmic reticulum (tER). SAR1A-GTP-dependent assembly of SEC16A on the ER membrane forms an organized scaffold defining an ERES. Required for secretory cargo traffic from the endoplasmic reticulum to the Golgi apparatus. Mediates the recruitment of MIA3/TANGO to ERES. Regulates both conventional (ER/Golgi-dependent) and GORASP2-mediated unconventional (ER/Golgi-independent) trafficking of CFTR to cell membrane. Acts as a RAB10 effector in the regulation of insulin-induced SLC2A4/GLUT4 glucose transporter-enriched vesicles delivery to the plasma membrane in adipocytes. The polypeptide is Protein transport protein Sec16A (Sec16a) (Mus musculus (Mouse)).